A 516-amino-acid chain; its full sequence is Cytochrome P450 monooxygenase lcsI (516 aa).

Residues 20 to 42 (ICVAAGCAFALSLLYLYVRALYL) traverse the membrane as a helical segment. 5 N-linked (GlcNAc...) asparagine glycosylation sites follow: Asn131, Asn184, Asn415, Asn420, and Asn442. Heme is bound at residue Cys456.

This sequence belongs to the cytochrome P450 family. Requires heme as cofactor.

It localises to the membrane. Its pathway is secondary metabolite biosynthesis. Its function is as follows. Cytochrome P450 monooxygenase; part of the gene cluster that mediates the biosynthesis of the lipopeptide antibiotics leucinostatins that show extensive biological activities, including antimalarial, antiviral, antibacterial, antifungal, and antitumor activities, as well as phytotoxic. Leucinostatin A contains nine amino acid residues, including the unusual amino acid 4-methyl-L-proline (MePro), 2-amino-6-hydroxy-4-methyl-8-oxodecanoic acid (AHyMeOA), 3-hydroxyleucine (HyLeu), alpha-aminoisobutyric acid (AIB), beta-Ala, a 4-methylhex-2-enoic acid at the N-terminus as well as a N1,N1-dimethylpropane-1,2-diamine (DPD) at the C-terminus. The biosynthesis of leucinostatins is probably initiated with the assembly of 4-methylhex-2-enoic acid by a reducing PKS. Two reducing polyketide synthases, lcsB and lcsC, have been identified in the cluster and it is not clear which is the one that assembles 4-methylhex-2-enoic acid since both contain KS, AT, DH, cMT, ER, KR and ACP domains. The polyketide residue might be transferred to the NRPS lcsA, mediated by two additional enzymes, the acyl-CoA ligase lcsD and the thioesterase lcsE. The linear polyketide carboxylic acid, which is released from PKS, is converted to a CoA thioester by lcsD, and then lcsE hydrolyzes the thiol bond and shuttles the polyketide intermediate to lcsA. The C domain of the first module catalyzed the condensation of 4-methylhex-2-enoic acid and MePro carried by domain A1, followed by successive condensations of nine amino acids to trigger the elongation of the linear peptide. A5 and A6 domains of lcsA are proposed to incorporate leucine, A2 AHyMeOA, and A3 incorporates HyLeu. A4, A7 and A8 incorporate AIB. The AHyMeOA in leucinostatin A activated by the A2 might be produced by the second PKS (lcsB or lcsC) present within the cluster. The MePro is probably produced via leucine cyclization and may originate from a separate pathway, independent of the cluster. Another nonproteinogenic amino acid, beta-Ala, could be produced by an aspartic acid decarboxylase also localized outside of the cluster. Two candidates are VFPBJ_01400 and VFPBJ_10476. The final peptide scaffold may be released by the NAD(P)H-dependent thioester reductase (TE) at the C-terminal region of lcsA. Transamination of the lcsA product by the transaminase lcsP may produce DPD at the C-terminus. Further hydroxylation steps performed alternatively by the cytochrome P450 monooxygenases lcsI, lcsK and lcsN then yield the non-methylated leucinostatins precursor. It is also possible that leucines can be hydroxylated prior to their incorporation into the peptide. Varying extents of methylation then lead to the formation of leucinostatins A and B. This chain is Cytochrome P450 monooxygenase lcsI, found in Purpureocillium lilacinum (Paecilomyces lilacinus).